Consider the following 463-residue polypeptide: Argininosuccinate lyase (463 aa).

Residues serine 27, asparagine 115, and threonine 161 each contribute to the 2-(N(omega)-L-arginino)succinate site. The active-site Proton acceptor is histidine 162. Catalysis depends on serine 283, which acts as the Proton donor. Residues asparagine 291, tyrosine 323, glutamine 328, and lysine 331 each contribute to the 2-(N(omega)-L-arginino)succinate site.

Belongs to the lyase 1 family. Argininosuccinate lyase subfamily. Homotetramer.

The enzyme catalyses 2-(N(omega)-L-arginino)succinate = fumarate + L-arginine. The protein operates within amino-acid biosynthesis; L-arginine biosynthesis; L-arginine from L-ornithine and carbamoyl phosphate: step 3/3. The polypeptide is Argininosuccinate lyase (ARG4) (Saccharomyces paradoxus (Yeast)).